The chain runs to 1160 residues: Large proline-rich protein BAG6 (1160 aa).

A Ubiquitin-like domain is found at 7 to 82 (IEVTVKTLDS…HLVERPPPQS (76 aa)). 8 disordered regions span residues 76–114 (ERPP…YTTS), 206–261 (EGQS…HPSP), 367–422 (IPMN…GQGT), 478–547 (ASAG…QTNQ), 563–628 (GDQT…DNLA), 672–711 (SGQP…AETL), 962–1038 (SARR…AEPW), and 1126–1160 (YAQQ…SEDA). A compositionally biased stretch (gly residues) spans 85-94 (PGGGGGGVSG). 2 stretches are compositionally biased toward low complexity: residues 95–110 (SSGA…QSSA) and 223–233 (SSSSFSAHPMD). Polar residues-rich tracts occupy residues 247 to 257 (QTEGETQSGPN) and 371 to 417 (LGST…QQTG). Composition is skewed to low complexity over residues 478–495 (ASAG…AGAQ) and 566–614 (TSTT…STAS). Positions 677–698 (FPSPNQQPPPSQATPPSAPSGP) are enriched in pro residues. Residues 699-708 (APTTAPSGGA) show a composition bias toward low complexity. A compositionally biased stretch (basic and acidic residues) spans 1132–1146 (SDIKKRLSDDPDYNH).

In terms of assembly, component of the bag6/bat3 complex.

It localises to the cytoplasm. It is found in the cytosol. The protein resides in the nucleus. Its subcellular location is the secreted. The protein localises to the extracellular exosome. In terms of biological role, ATP-independent molecular chaperone preventing the aggregation of misfolded and hydrophobic patches-containing proteins. Functions as part of a cytosolic protein quality control complex, the bag6/bat3 complex, which maintains these client proteins in a soluble state and participates in their proper delivery to the endoplasmic reticulum or alternatively can promote their sorting to the proteasome where they undergo degradation. The bag6/bat3 complex is involved in the post-translational delivery of tail-anchored/type II transmembrane proteins to the endoplasmic reticulum membrane. Similarly, the bag6/bat3 complex also functions as a sorting platform for proteins of the secretory pathway that are mislocalized to the cytosol either delivering them to the proteasome for degradation or to the endoplasmic reticulum. The bag6/bat3 complex also plays a role in the endoplasmic reticulum-associated degradation (ERAD), a quality control mechanism that eliminates unwanted proteins of the endoplasmic reticulum through their retrotranslocation to the cytosol and their targeting to the proteasome. It maintains these retrotranslocated proteins in an unfolded yet soluble state condition in the cytosol to ensure their proper delivery to the proteasome. Also required for selective ubiquitin-mediated degradation of defective nascent chain polypeptides by the proteasome. Also involved in endoplasmic reticulum stress-induced pre-emptive quality control, a mechanism that selectively attenuates the translocation of newly synthesized proteins into the endoplasmic reticulum and reroutes them to the cytosol for proteasomal degradation. May ensure the proper degradation of these proteins and thereby protects the endoplasmic reticulum from protein overload upon stress. By stabilizing a large spectrum of proteins, may indirectly affect different biological processes including apoptosis. By controlling the steady-state expression of the IGF1R receptor, indirectly regulates the insulin-like growth factor receptor signaling pathway. When nuclear, may also act as a component of some chromatin regulator complex. The protein is Large proline-rich protein BAG6 of Danio rerio (Zebrafish).